Consider the following 265-residue polypeptide: NAD kinase 2 (265 aa).

Asparagine 51 serves as the catalytic Proton acceptor. NAD(+) is bound by residues asparagine 122–glutamate 123, arginine 149, aspartate 151, threonine 162–serine 167, alanine 186, and asparagine 226.

It belongs to the NAD kinase family. A divalent metal cation is required as a cofactor.

The protein resides in the cytoplasm. The catalysed reaction is NAD(+) + ATP = ADP + NADP(+) + H(+). In terms of biological role, involved in the regulation of the intracellular balance of NAD and NADP, and is a key enzyme in the biosynthesis of NADP. Catalyzes specifically the phosphorylation on 2'-hydroxyl of the adenosine moiety of NAD to yield NADP. This chain is NAD kinase 2, found in Halalkalibacterium halodurans (strain ATCC BAA-125 / DSM 18197 / FERM 7344 / JCM 9153 / C-125) (Bacillus halodurans).